A 497-amino-acid chain; its full sequence is UDP-N-acetylmuramoyl-L-alanyl-D-glutamate--2,6-diaminopimelate ligase (497 aa).

UDP-N-acetyl-alpha-D-muramoyl-L-alanyl-D-glutamate is bound by residues L27 and S29. 116-122 (GTNGKTT) serves as a coordination point for ATP. Residues N157, 158–159 (TT), S185, Q191, and R193 contribute to the UDP-N-acetyl-alpha-D-muramoyl-L-alanyl-D-glutamate site. K225 is modified (N6-carboxylysine). Residues R392, 416–419 (DNPR), G467, and E471 each bind meso-2,6-diaminopimelate. The Meso-diaminopimelate recognition motif motif lies at 416–419 (DNPR).

The protein belongs to the MurCDEF family. MurE subfamily. Requires Mg(2+) as cofactor. Carboxylation is probably crucial for Mg(2+) binding and, consequently, for the gamma-phosphate positioning of ATP.

Its subcellular location is the cytoplasm. The enzyme catalyses UDP-N-acetyl-alpha-D-muramoyl-L-alanyl-D-glutamate + meso-2,6-diaminopimelate + ATP = UDP-N-acetyl-alpha-D-muramoyl-L-alanyl-gamma-D-glutamyl-meso-2,6-diaminopimelate + ADP + phosphate + H(+). It participates in cell wall biogenesis; peptidoglycan biosynthesis. Its function is as follows. Catalyzes the addition of meso-diaminopimelic acid to the nucleotide precursor UDP-N-acetylmuramoyl-L-alanyl-D-glutamate (UMAG) in the biosynthesis of bacterial cell-wall peptidoglycan. The chain is UDP-N-acetylmuramoyl-L-alanyl-D-glutamate--2,6-diaminopimelate ligase from Buchnera aphidicola subsp. Schizaphis graminum (strain Sg).